The following is a 327-amino-acid chain: Phenylalanine--tRNA ligase alpha subunit (327 aa).

Mg(2+) is bound at residue glutamate 252.

It belongs to the class-II aminoacyl-tRNA synthetase family. Phe-tRNA synthetase alpha subunit type 1 subfamily. Tetramer of two alpha and two beta subunits. Mg(2+) is required as a cofactor.

Its subcellular location is the cytoplasm. It catalyses the reaction tRNA(Phe) + L-phenylalanine + ATP = L-phenylalanyl-tRNA(Phe) + AMP + diphosphate + H(+). This chain is Phenylalanine--tRNA ligase alpha subunit, found in Vibrio campbellii (strain ATCC BAA-1116).